The following is a 156-amino-acid chain: ATP synthase subunit b 2 (156 aa).

A helical transmembrane segment spans residues 7-29; that stretch reads LLGQAISFAIFVWFCMKYVWPPV.

It belongs to the ATPase B chain family. In terms of assembly, F-type ATPases have 2 components, F(1) - the catalytic core - and F(0) - the membrane proton channel. F(1) has five subunits: alpha(3), beta(3), gamma(1), delta(1), epsilon(1). F(0) has three main subunits: a(1), b(2) and c(10-14). The alpha and beta chains form an alternating ring which encloses part of the gamma chain. F(1) is attached to F(0) by a central stalk formed by the gamma and epsilon chains, while a peripheral stalk is formed by the delta and b chains.

Its subcellular location is the cell inner membrane. F(1)F(0) ATP synthase produces ATP from ADP in the presence of a proton or sodium gradient. F-type ATPases consist of two structural domains, F(1) containing the extramembraneous catalytic core and F(0) containing the membrane proton channel, linked together by a central stalk and a peripheral stalk. During catalysis, ATP synthesis in the catalytic domain of F(1) is coupled via a rotary mechanism of the central stalk subunits to proton translocation. Functionally, component of the F(0) channel, it forms part of the peripheral stalk, linking F(1) to F(0). This chain is ATP synthase subunit b 2, found in Marinomonas sp. (strain MWYL1).